The chain runs to 572 residues: DBH-like monooxygenase protein 2 homolog (572 aa).

A signal peptide spans 1-26 (MGTCLKGNMSVLSLVLFLLSVQQFWA). N-linked (GlcNAc...) asparagine glycosylation is found at Asn8, Asn64, Asn187, and Asn203. Over 27–552 (QEDPLLPFSE…SPPEPCVRAC (526 aa)) the chain is Extracellular. A DOMON domain is found at 42 to 157 (HNVQLKWGFD…LPMKLIYAYG (116 aa)). Tyr207 is an active-site residue. Intrachain disulfides connect Cys209–Cys256 and Cys244–Cys263. 2 residues coordinate Cu cation: His237 and His238. His301 is a Cu cation binding site. A glycan (N-linked (GlcNAc...) asparagine) is linked at Asn306. Disulfide bonds link Cys358–Cys472 and Cys435–Cys457. Residue His381 is part of the active site. Cu cation-binding residues include His381, His383, and Met456. 4 N-linked (GlcNAc...) asparagine glycosylation sites follow: Asn468, Asn503, Asn518, and Asn534. The helical transmembrane segment at 553–571 (ATKNLAFMSLFLCLAGMWA) threads the bilayer. A topological domain (cytoplasmic) is located at residue Ser572.

This sequence belongs to the copper type II ascorbate-dependent monooxygenase family. Cu(2+) serves as cofactor.

It localises to the membrane. The chain is DBH-like monooxygenase protein 2 homolog (moxd2) from Danio rerio (Zebrafish).